The chain runs to 156 residues: Ribosomal RNA large subunit methyltransferase H (156 aa).

Residues Leu-73, Gly-104, and 123 to 128 (VSSLTL) each bind S-adenosyl-L-methionine.

The protein belongs to the RNA methyltransferase RlmH family. In terms of assembly, homodimer.

The protein resides in the cytoplasm. It carries out the reaction pseudouridine(1915) in 23S rRNA + S-adenosyl-L-methionine = N(3)-methylpseudouridine(1915) in 23S rRNA + S-adenosyl-L-homocysteine + H(+). In terms of biological role, specifically methylates the pseudouridine at position 1915 (m3Psi1915) in 23S rRNA. The polypeptide is Ribosomal RNA large subunit methyltransferase H (Burkholderia thailandensis (strain ATCC 700388 / DSM 13276 / CCUG 48851 / CIP 106301 / E264)).